The following is a 479-amino-acid chain: Transmembrane protein 161A (479 aa).

The N-terminal stretch at 1–28 (MAVLGVQLVVTLLTATLMHRLAPHCSFA) is a signal peptide. The Extracellular portion of the chain corresponds to 29–98 (RWLLCNGSLF…LTTVDALVLR (70 aa)). N-linked (GlcNAc...) asparagine glycosylation occurs at Asn34. Ser69 is subject to Phosphoserine. A helical membrane pass occupies residues 99 to 119 (FFLEYQWFVDFAVYSGGVYLF). At 120-134 (TEAYYYMLGPAKETN) the chain is on the cytoplasmic side. A helical membrane pass occupies residues 135-155 (IAVFWCLLTVTFSIKMFLTVT). At 156–166 (RLYFSAEEGGE) the chain is on the extracellular side. A helical membrane pass occupies residues 167–187 (RSVCLTFAFLFLLLAMLVQVV). Residues 188–224 (REETLELGLEPGLASMTQNLEPLLKKQGWDWALPVAK) are Cytoplasmic-facing. A helical membrane pass occupies residues 225-245 (LAIRVGLAVVGSVLGAFLTFP). Topologically, residues 246–263 (GLRLAQTHRDALTMSEDR) are extracellular. A helical transmembrane segment spans residues 264–284 (PMLQFLLHTSFLSPLFILWLW). Topologically, residues 285–304 (TKPIARDFLHQPPFGETRFS) are cytoplasmic. Residues 305–325 (LLSDSAFDSGRLWLLVVLCLL) traverse the membrane as a helical segment. Over 326–370 (RLAVTRPHLQAYLCLAKARVEQLRREAGRIEAREIQQRVVRVYCY) the chain is Extracellular. The helical transmembrane segment at 371 to 391 (VTVVSLQYLTPLILTLNCTLL) threads the bilayer. At 392–449 (LKTLGGYSWGLGPAPLLSPDPSSASAAPIGSGEDEVQQTAARIAGALGGLLTPLFLRG) the chain is on the cytoplasmic side. Residues 450 to 470 (VLAYLIWWTAACQLLASLFGL) traverse the membrane as a helical segment. Residues 471–479 (YFHQHLAGS) are Extracellular-facing.

This sequence belongs to the TMEM161 family.

It localises to the membrane. Its function is as follows. May play a role in protection against oxidative stress. Overexpression leads to reduced levels of oxidant-induced DNA damage and apoptosis. The chain is Transmembrane protein 161A (TMEM161A) from Homo sapiens (Human).